A 100-amino-acid chain; its full sequence is Small ribosomal subunit protein uS14c (100 aa).

Belongs to the universal ribosomal protein uS14 family. In terms of assembly, part of the 30S ribosomal subunit.

It is found in the plastid. Its subcellular location is the chloroplast. Binds 16S rRNA, required for the assembly of 30S particles. The sequence is that of Small ribosomal subunit protein uS14c from Vitis vinifera (Grape).